Consider the following 369-residue polypeptide: S-adenosylmethionine decarboxylase proenzyme 2 (369 aa).

Catalysis depends on residues Glu9 and Glu12. Ser69 (schiff-base intermediate with substrate; via pyruvic acid) is an active-site residue. The residue at position 69 (Ser69) is a Pyruvic acid (Ser); by autocatalysis. Cys83 functions as the Proton donor; for catalytic activity in the catalytic mechanism. Active-site proton acceptor; for processing activity residues include Ser236 and His249.

This sequence belongs to the eukaryotic AdoMetDC family. It depends on pyruvate as a cofactor. Is synthesized initially as an inactive proenzyme. Formation of the active enzyme involves a self-maturation process in which the active site pyruvoyl group is generated from an internal serine residue via an autocatalytic post-translational modification. Two non-identical subunits are generated from the proenzyme in this reaction, and the pyruvate is formed at the N-terminus of the alpha chain, which is derived from the carboxyl end of the proenzyme. The post-translation cleavage follows an unusual pathway, termed non-hydrolytic serinolysis, in which the side chain hydroxyl group of the serine supplies its oxygen atom to form the C-terminus of the beta chain, while the remainder of the serine residue undergoes an oxidative deamination to produce ammonia and the pyruvoyl group blocking the N-terminus of the alpha chain.

It catalyses the reaction S-adenosyl-L-methionine + H(+) = S-adenosyl 3-(methylsulfanyl)propylamine + CO2. It functions in the pathway amine and polyamine biosynthesis; S-adenosylmethioninamine biosynthesis; S-adenosylmethioninamine from S-adenosyl-L-methionine: step 1/1. This Brassica juncea (Indian mustard) protein is S-adenosylmethionine decarboxylase proenzyme 2 (SAMDC2).